The chain runs to 807 residues: Glycerol-3-phosphate acyltransferase (807 aa).

The short motif at 306 to 311 (HRSHMD) is the HXXXXD motif element.

This sequence belongs to the GPAT/DAPAT family.

It is found in the cell inner membrane. It catalyses the reaction sn-glycerol 3-phosphate + an acyl-CoA = a 1-acyl-sn-glycero-3-phosphate + CoA. Its pathway is phospholipid metabolism; CDP-diacylglycerol biosynthesis; CDP-diacylglycerol from sn-glycerol 3-phosphate: step 1/3. This chain is Glycerol-3-phosphate acyltransferase (plsB), found in Escherichia coli O157:H7.